Here is a 226-residue protein sequence, read N- to C-terminus: Ribonuclease 3 (226 aa).

The region spanning 7-129 is the RNase III domain; sequence LPRLCRTLGY…IIGAVYLDAD (123 aa). Mg(2+) is bound at residue E42. Residue D46 is part of the active site. Mg(2+)-binding residues include D115 and E118. The active site involves E118. A DRBM domain is found at 156–226; the sequence is DAKTLLQEYL…AAQVLELLNQ (71 aa).

It belongs to the ribonuclease III family. As to quaternary structure, homodimer. Mg(2+) serves as cofactor.

Its subcellular location is the cytoplasm. It catalyses the reaction Endonucleolytic cleavage to 5'-phosphomonoester.. Functionally, digests double-stranded RNA. Involved in the processing of primary rRNA transcript to yield the immediate precursors to the large and small rRNAs (23S and 16S). Processes some mRNAs, and tRNAs when they are encoded in the rRNA operon. Processes pre-crRNA and tracrRNA of type II CRISPR loci if present in the organism. The chain is Ribonuclease 3 from Shewanella amazonensis (strain ATCC BAA-1098 / SB2B).